The primary structure comprises 81 residues: Sec-independent protein translocase protein TatA (81 aa).

The helical transmembrane segment at 1-21 threads the bilayer; that stretch reads MGMPSGQELLIILAIVVLLFG. Residues 45 to 81 are disordered; the sequence is NEDDDTEVKSASTEAPKKVESAEEVASKESSKTPTQA. Residues 59-75 are compositionally biased toward basic and acidic residues; the sequence is APKKVESAEEVASKESS.

The protein belongs to the TatA/E family. The Tat system comprises two distinct complexes: a TatABC complex, containing multiple copies of TatA, TatB and TatC subunits, and a separate TatA complex, containing only TatA subunits. Substrates initially bind to the TatABC complex, which probably triggers association of the separate TatA complex to form the active translocon.

Its subcellular location is the cell inner membrane. Its function is as follows. Part of the twin-arginine translocation (Tat) system that transports large folded proteins containing a characteristic twin-arginine motif in their signal peptide across membranes. TatA could form the protein-conducting channel of the Tat system. The sequence is that of Sec-independent protein translocase protein TatA from Sulfurimonas denitrificans (strain ATCC 33889 / DSM 1251) (Thiomicrospira denitrificans (strain ATCC 33889 / DSM 1251)).